Consider the following 244-residue polypeptide: NAD-dependent protein deacetylase (244 aa).

One can recognise a Deacetylase sirtuin-type domain in the interval 1-244 (MSATERQLQY…IGDTCRQLRA (244 aa)). NAD(+) is bound by residues alanine 27, threonine 31, phenylalanine 38, arginine 39, glutamine 107, isoleucine 109, aspartate 110, and histidine 125. Residue phenylalanine 38 participates in nicotinamide binding. 2 residues coordinate nicotinamide: isoleucine 109 and aspartate 110. Histidine 125 (proton acceptor) is an active-site residue. Zn(2+) contacts are provided by cysteine 133, cysteine 136, cysteine 153, and cysteine 156. The NAD(+) site is built by serine 192, serine 193, asparagine 217, and isoleucine 235.

This sequence belongs to the sirtuin family. Class U subfamily. It depends on Zn(2+) as a cofactor.

The protein localises to the cytoplasm. It catalyses the reaction N(6)-acetyl-L-lysyl-[protein] + NAD(+) + H2O = 2''-O-acetyl-ADP-D-ribose + nicotinamide + L-lysyl-[protein]. In terms of biological role, NAD-dependent protein deacetylase which modulates the activities of several enzymes which are inactive in their acetylated form. This chain is NAD-dependent protein deacetylase, found in Chromobacterium violaceum (strain ATCC 12472 / DSM 30191 / JCM 1249 / CCUG 213 / NBRC 12614 / NCIMB 9131 / NCTC 9757 / MK).